A 472-amino-acid chain; its full sequence is MRRKRDTHIRRKRASATQLYKTCKQSGTCPPDIIPKVEGNTLADQILKYGSIGVFFGGLGIGSGSGTGGRTGYVPLPTTTPSRPVEIPLQPTRPPVITSVGASDSSIVSLVEESSFIEAGVPGPTSIVPSSSGFNVTTSVDSTPAIIDVATISDTTQVSVSTFNNPTFTDPSVLQPPPPLEASGRLLFSNDTVTTHSYENIPLDTFVVTTDNNSIVSSTPIPGRHPPARLGLYGRAIQQVKVVDPAFVTTPTRLVTYDNPAFEGLQDTTLEFQHSDLHNAPDSDFLDIVKLHRPALTARKTGIRVSRLGQRATMFTRSGKRIGGRVHFYHDLSPIPTENIELQPLLPSASATVTDANGINDGLYDVLLDNNVDITEVETPTGTNTQSVFASEISTTTANTTIPLNAGLDTHPGPDIALPVPTAETIFTPTVPVQPSGPIYIYGSDFILHPSLYVIPRKRKRLSYFFADVATY.

Positions 1-14 (MRRKRDTHIRRKRA) match the Nuclear localization signal motif. Cys23 and Cys29 are oxidised to a cystine. The Nuclear localization signal signature appears at 454 to 462 (VIPRKRKRL).

Belongs to the papillomaviridae L2 protein family. Interacts with major capsid protein L1. Interacts with E2; this interaction inhibits E2 transcriptional activity but not the DNA replication function E2. Interacts with host GADD45GIP1. Interacts with host HSPA8; this interaction is required for L2 nuclear translocation. Interacts with host importins KPNB2 and KPNB3. Forms a complex with importin alpha2-beta1 heterodimers via interaction with the importin alpha2 adapter. Interacts with host DYNLT1; this interaction is essential for virus intracellular transport during entry. Interacts (via C-terminus) with host retromer subunits VPS35 and VPS29. Post-translationally, highly phosphorylated.

The protein resides in the virion. Its subcellular location is the host nucleus. It localises to the host early endosome. The protein localises to the host Golgi apparatus. Functionally, minor protein of the capsid that localizes along the inner surface of the virion, within the central cavities beneath the L1 pentamers. Plays a role in capsid stabilization through interaction with the major capsid protein L1. Once the virion enters the host cell, L2 escorts the genomic DNA into the nucleus by promoting escape from the endosomal compartments and traffic through the host Golgi network. Mechanistically, the C-terminus of L2 possesses a cell-penetrating peptide that protudes from the host endosome, interacts with host cytoplasmic retromer cargo and thereby mediates the capsid delivery to the host trans-Golgi network. Plays a role through its interaction with host dynein in the intracellular microtubule-dependent transport of viral capsid toward the nucleus. Mediates the viral genome import into the nucleus through binding to host importins. Once within the nucleus, L2 localizes viral genomes to host PML bodies in order to activate early gene expression for establishment of infection. Later on, promotes late gene expression by interacting with the viral E2 protein and by inhibiting its transcriptional activation functions. During virion assembly, encapsidates the genome by direct interaction with the viral DNA. The chain is Minor capsid protein L2 from Human papillomavirus type 34.